A 1549-amino-acid polypeptide reads, in one-letter code: Zinc finger MYM-type protein 4 (1549 aa).

Alanine 2 bears the N-acetylalanine mark. Residues 83–108 (VVSSDNEDEQDCSSKDNLVSSVHTDG) form a disordered region. Positions 97-106 (KDNLVSSVHT) are enriched in polar residues. Threonine 106 carries the post-translational modification Phosphothreonine. Phosphoserine occurs at positions 109 and 121. Glycyl lysine isopeptide (Lys-Gly) (interchain with G-Cter in SUMO2) cross-links involve residues lysine 139 and lysine 148. Serine 161 carries the phosphoserine modification. A Glycyl lysine isopeptide (Lys-Gly) (interchain with G-Cter in SUMO2) cross-link involves residue lysine 195. At serine 197 the chain carries Phosphoserine. Residues lysine 201 and lysine 232 each participate in a glycyl lysine isopeptide (Lys-Gly) (interchain with G-Cter in SUMO2) cross-link. Serine 242 bears the Phosphoserine mark. Lysine 250 participates in a covalent cross-link: Glycyl lysine isopeptide (Lys-Gly) (interchain with G-Cter in SUMO1); alternate. Lysine 250 is covalently cross-linked (Glycyl lysine isopeptide (Lys-Gly) (interchain with G-Cter in SUMO2); alternate). The disordered stretch occupies residues 267–291 (GLLDRVKDEPDNAQEYSHGQQQKTQ). Glycyl lysine isopeptide (Lys-Gly) (interchain with G-Cter in SUMO2) cross-links involve residues lysine 273, lysine 289, lysine 327, lysine 400, lysine 428, and lysine 430. Residues 280 to 290 (QEYSHGQQQKT) show a composition bias toward polar residues. 9 MYM-type zinc fingers span residues 362 to 402 (QLFC…PKDV), 414 to 457 (KDFC…RHEV), 464 to 499 (HKLCSDACFSKFRSANNLTMNCCENCGGYCYSGSGQ), 510 to 544 (KKFCSSMCVTSYKQKSAKITPCALCKSLRSSAEMI), 554 to 592 (ELFCSVNCLSAYRVKMVTSAGVQVQCNSCKTSAIPQYHL), 600 to 631 (RNFCSYSCVVAFQNLFNKPTGMNSSVVPLSQG), 708 to 742 (FQFCGKNCCDEYKKINNVMAMCEYCKIEKIIKETV), 749 to 788 (KSFCSEGCKLLYKHDLGKRWGSHCKMCSYCLQTSPKLIQN), and 795 to 829 (EDFCCEECMSKYTVLFYQMAKCDGCKRQGKLSESL). Residues lysine 1035 and lysine 1062 each participate in a glycyl lysine isopeptide (Lys-Gly) (interchain with G-Cter in SUMO2) cross-link. Phosphoserine is present on residues serine 1065 and serine 1072. Glycyl lysine isopeptide (Lys-Gly) (interchain with G-Cter in SUMO2) cross-links involve residues lysine 1081 and lysine 1128. The disordered stretch occupies residues 1124-1185 (DSELKPFSKG…RRGRKKSVVP (62 aa)). Over residues 1125-1135 (SELKPFSKGET) the composition is skewed to basic and acidic residues. Residues 1161 to 1182 (SRTRRRHRDGFPQPRRRGRKKS) show a composition bias toward basic residues. Phosphoserine occurs at positions 1182 and 1257. Residue lysine 1432 forms a Glycyl lysine isopeptide (Lys-Gly) (interchain with G-Cter in SUMO2) linkage. Serine 1540, serine 1543, and serine 1548 each carry phosphoserine.

Its function is as follows. Plays a role in the regulation of cell morphology and cytoskeletal organization. This chain is Zinc finger MYM-type protein 4 (Zmym4), found in Mus musculus (Mouse).